The primary structure comprises 569 residues: Arginine--tRNA ligase (569 aa).

Positions 123–133 match the 'HIGH' region motif; the sequence is ANPNGPLHVGH.

The protein belongs to the class-I aminoacyl-tRNA synthetase family.

The protein resides in the cytoplasm. It carries out the reaction tRNA(Arg) + L-arginine + ATP = L-arginyl-tRNA(Arg) + AMP + diphosphate. This chain is Arginine--tRNA ligase, found in Methanosarcina mazei (strain ATCC BAA-159 / DSM 3647 / Goe1 / Go1 / JCM 11833 / OCM 88) (Methanosarcina frisia).